An 863-amino-acid polypeptide reads, in one-letter code: DNA gyrase subunit A (863 aa).

A Topo IIA-type catalytic domain is found at 37 to 500 (LPDARDGLKP…DYDDIDIEDL (464 aa)). Catalysis depends on Tyr-125, which acts as the O-(5'-phospho-DNA)-tyrosine intermediate. The GyrA-box signature appears at 527 to 533 (QKRGGKG).

This sequence belongs to the type II topoisomerase GyrA/ParC subunit family. As to quaternary structure, heterotetramer, composed of two GyrA and two GyrB chains. In the heterotetramer, GyrA contains the active site tyrosine that forms a transient covalent intermediate with DNA, while GyrB binds cofactors and catalyzes ATP hydrolysis.

Its subcellular location is the cytoplasm. It catalyses the reaction ATP-dependent breakage, passage and rejoining of double-stranded DNA.. Its function is as follows. A type II topoisomerase that negatively supercoils closed circular double-stranded (ds) DNA in an ATP-dependent manner to modulate DNA topology and maintain chromosomes in an underwound state. Negative supercoiling favors strand separation, and DNA replication, transcription, recombination and repair, all of which involve strand separation. Also able to catalyze the interconversion of other topological isomers of dsDNA rings, including catenanes and knotted rings. Type II topoisomerases break and join 2 DNA strands simultaneously in an ATP-dependent manner. The chain is DNA gyrase subunit A from Campylobacter jejuni subsp. jejuni serotype O:2 (strain ATCC 700819 / NCTC 11168).